A 159-amino-acid polypeptide reads, in one-letter code: Cyclic pyranopterin monophosphate synthase (159 aa).

Substrate contacts are provided by residues 75 to 77 and 113 to 114; these read LCH and ME. Aspartate 128 is an active-site residue.

It belongs to the MoaC family. As to quaternary structure, homohexamer; trimer of dimers.

The enzyme catalyses (8S)-3',8-cyclo-7,8-dihydroguanosine 5'-triphosphate = cyclic pyranopterin phosphate + diphosphate. The protein operates within cofactor biosynthesis; molybdopterin biosynthesis. Its function is as follows. Catalyzes the conversion of (8S)-3',8-cyclo-7,8-dihydroguanosine 5'-triphosphate to cyclic pyranopterin monophosphate (cPMP). The chain is Cyclic pyranopterin monophosphate synthase from Thiobacillus denitrificans (strain ATCC 25259 / T1).